Consider the following 162-residue polypeptide: 2-C-methyl-D-erythritol 2,4-cyclodiphosphate synthase (162 aa).

A divalent metal cation is bound by residues D9 and H11. Residues 9–11 (DVH) and 37–38 (HS) each bind 4-CDP-2-C-methyl-D-erythritol 2-phosphate. H45 contacts a divalent metal cation.

This sequence belongs to the IspF family. In terms of assembly, homotrimer. A divalent metal cation serves as cofactor.

The enzyme catalyses 4-CDP-2-C-methyl-D-erythritol 2-phosphate = 2-C-methyl-D-erythritol 2,4-cyclic diphosphate + CMP. Its pathway is isoprenoid biosynthesis; isopentenyl diphosphate biosynthesis via DXP pathway; isopentenyl diphosphate from 1-deoxy-D-xylulose 5-phosphate: step 4/6. Involved in the biosynthesis of isopentenyl diphosphate (IPP) and dimethylallyl diphosphate (DMAPP), two major building blocks of isoprenoid compounds. Catalyzes the conversion of 4-diphosphocytidyl-2-C-methyl-D-erythritol 2-phosphate (CDP-ME2P) to 2-C-methyl-D-erythritol 2,4-cyclodiphosphate (ME-CPP) with a corresponding release of cytidine 5-monophosphate (CMP). The chain is 2-C-methyl-D-erythritol 2,4-cyclodiphosphate synthase from Petrotoga mobilis (strain DSM 10674 / SJ95).